The chain runs to 209 residues: MTKGILGRKIGMTQVFAENGDLIPVTVVEAAANVVLQKKTTDTDGYEAIQIGFDDKREKLSNKPEKGHVAKAETAPKRFVKELRGAELDAYEVGQEVKVDIFANGDIVDVTGTSKGKGFQGAIKRHGQSRGPMTHGSRYHRRPGSMGPVDPNRVFKGKLLPGRMGGEQITVQNLEIVKVDAERNLLLIKGNVPGAKKSLVTVKSAVKSK.

The tract at residues G118–D150 is disordered.

Belongs to the universal ribosomal protein uL3 family. In terms of assembly, part of the 50S ribosomal subunit. Forms a cluster with proteins L14 and L19.

In terms of biological role, one of the primary rRNA binding proteins, it binds directly near the 3'-end of the 23S rRNA, where it nucleates assembly of the 50S subunit. The polypeptide is Large ribosomal subunit protein uL3 (Bacillus pumilus (strain SAFR-032)).